Reading from the N-terminus, the 509-residue chain is Bifunctional purine biosynthesis protein PurH (509 aa).

The region spanning 1–144 (MKRALISVSD…KNYAAVTVVV (144 aa)) is the MGS-like domain.

Belongs to the PurH family.

The enzyme catalyses (6R)-10-formyltetrahydrofolate + 5-amino-1-(5-phospho-beta-D-ribosyl)imidazole-4-carboxamide = 5-formamido-1-(5-phospho-D-ribosyl)imidazole-4-carboxamide + (6S)-5,6,7,8-tetrahydrofolate. The catalysed reaction is IMP + H2O = 5-formamido-1-(5-phospho-D-ribosyl)imidazole-4-carboxamide. Its pathway is purine metabolism; IMP biosynthesis via de novo pathway; 5-formamido-1-(5-phospho-D-ribosyl)imidazole-4-carboxamide from 5-amino-1-(5-phospho-D-ribosyl)imidazole-4-carboxamide (10-formyl THF route): step 1/1. The protein operates within purine metabolism; IMP biosynthesis via de novo pathway; IMP from 5-formamido-1-(5-phospho-D-ribosyl)imidazole-4-carboxamide: step 1/1. This chain is Bifunctional purine biosynthesis protein PurH, found in Listeria welshimeri serovar 6b (strain ATCC 35897 / DSM 20650 / CCUG 15529 / CIP 8149 / NCTC 11857 / SLCC 5334 / V8).